An 821-amino-acid chain; its full sequence is Ribonuclease R (821 aa).

One can recognise an RNB domain in the interval 267 to 593; sequence RVDLRALPLV…LLHRAIKYLI (327 aa). The region spanning 652 to 733 is the S1 motif domain; that stretch reads GEELEGVVAN…DDRQIDFELV (82 aa). The disordered stretch occupies residues 739–821; sequence LRGQGKTAKK…KSGKVRDKTK (83 aa). Basic and acidic residues-rich tracts occupy residues 748-764 and 774-794; these read KRADEARAKAQGKKEAA and TKSELKPQVEATRRPDSEGRS. The span at 795–814 shows a compositional bias: basic residues; the sequence is KPKKTKAPKKRKDQARKKSG.

This sequence belongs to the RNR ribonuclease family. RNase R subfamily.

The protein localises to the cytoplasm. The catalysed reaction is Exonucleolytic cleavage in the 3'- to 5'-direction to yield nucleoside 5'-phosphates.. 3'-5' exoribonuclease that releases 5'-nucleoside monophosphates and is involved in maturation of structured RNAs. The polypeptide is Ribonuclease R (Vibrio cholerae serotype O1 (strain ATCC 39315 / El Tor Inaba N16961)).